The sequence spans 722 residues: MLDRCEMPIQLDNEKLRRDVRLSGSRLDLPQLCNGSRRLDGHNNHVAANENTVTTTSLNGNGNGNGNSNSNNNNNIGSPVSSSTTNSSNGGNERGSSTKSNSSSGSGSSGNSASSTGSGELKCNTPMTPSELVKKFRNYLTDLEFEELKVYKEVWYFGQHASKNYNKPAPTANTTNLGYDDDNGNYKIIEHDHIAFRYEILEVIGKGSFGQVIRALDHKTNTHVAIKIIRNKKRFLNQAVVELNILDELREKDADGSHNVIHMLDYTYFRKHLCITFELMSLNLYELIKKNNYNGFSMSLIRRFCNSIVKCLRLLYKENIIHCDLKPENILLKQRGSSSIKVIDFGSSCYVDRKIYTYIQSRFYRSPEVILGLQYGTAIDMWSLGCILAELYTGFPLFPGENEVEQLACIMEVLGLPPKVLISVARRRRLFFDSRDAPRCITNTKGRKRSPGSKSLAHILHCQDRYFIDFLQRCLEWDPAERMTPDEAAHHEFLQPSASSRHRSCRMSSSSSSSGLNSVSQKSSCYSFSEISPGTNGPVVASITSTTAVHNAAIATTTKSRQQPPSQSHGHAQSNGHLPDIKLSASDKYNSMQKVAVRSKITSSVSDLESVQQYSLHRIYGGVGSGSTHHVSSAATRKHLPGTGSGIVGAMSSKYGSSTLAHNHHNVTHHNASTATIATTTHHHHHHGGQQQQQSSSGASTMAMSHSQSTGDVSDRAIFGRA.

Position 25 is a phosphoserine (Ser-25). The segment at 54–127 (TTTSLNGNGN…SGELKCNTPM (74 aa)) is disordered. Residues 66-119 (GNSNSNNNNNIGSPVSSSTTNSSNGGNERGSSTKSNSSSGSGSSGNSASSTGSG) show a composition bias toward low complexity. A Protein kinase domain is found at 198-494 (YEILEVIGKG…PDEAAHHEFL (297 aa)). Residues 204–212 (IGKGSFGQV) and Lys-227 contribute to the ATP site. Asp-324 acts as the Proton acceptor in catalysis. Phosphotyrosine; by autocatalysis is present on residues Tyr-356 and Tyr-358. Disordered regions lie at residues 494–519 (LQPS…LNSV), 557–582 (TTKS…PDIK), 624–643 (GSGS…LPGT), and 679–722 (TTTH…FGRA). Residues 506 to 519 (RMSSSSSSSGLNSV) show a composition bias toward low complexity. The segment covering 557–576 (TTKSRQQPPSQSHGHAQSNG) has biased composition (polar residues). 2 stretches are compositionally biased toward low complexity: residues 626–635 (GSTHHVSSAA) and 689–707 (GQQQ…MSHS).

This sequence belongs to the protein kinase superfamily. CMGC Ser/Thr protein kinase family. MNB/DYRK subfamily. The cofactor is Mg(2+). Phosphorylated on serine/threonine residues.

The protein localises to the cytoplasm. The enzyme catalyses L-seryl-[protein] + ATP = O-phospho-L-seryl-[protein] + ADP + H(+). It catalyses the reaction L-threonyl-[protein] + ATP = O-phospho-L-threonyl-[protein] + ADP + H(+). The catalysed reaction is L-tyrosyl-[protein] + ATP = O-phospho-L-tyrosyl-[protein] + ADP + H(+). With respect to regulation, autophosphorylates on Tyr-356 and Tyr-358. Its function is as follows. In vitro; can phosphorylate exogenous substrates on Ser and Thr residues. May have a physiological role in development being involved in cellular growth and differentiation. In Drosophila melanogaster (Fruit fly), this protein is Dual specificity tyrosine-phosphorylation-regulated kinase 2.